A 136-amino-acid chain; its full sequence is Small ribosomal subunit protein uS11c (136 aa).

Belongs to the universal ribosomal protein uS11 family. Part of the 30S ribosomal subunit.

The protein resides in the plastid. The protein localises to the chloroplast. This is Small ribosomal subunit protein uS11c from Guizotia abyssinica (Niger).